A 434-amino-acid polypeptide reads, in one-letter code: F-box/FBD/LRR-repeat protein At3g26920 (434 aa).

Residues 16–65 (EDRISQLPEALLLQILSLLPTKEVVAVSVLAKRWRFLWKMVPSLEFFYYF) form the F-box domain. LRR repeat units lie at residues 69-95 (LERF…HLNM), 100-125 (DPRI…VLKV), 145-172 (TLEL…NLHE), 173-198 (VEFV…VIHQ), 219-244 (VIVE…KIEG), 265-290 (IIDV…SLKV), and 315-341 (TYKP…KIFD). The region spanning 353 to 403 (KWNEPKNVPECLLLHLETFVWTCYEGKLENEIELAKYILRNARRLKKATFS) is the FBD domain.

In Arabidopsis thaliana (Mouse-ear cress), this protein is F-box/FBD/LRR-repeat protein At3g26920.